The following is an 845-amino-acid chain: Protein P (845 aa).

A terminal protein domain (TP) region spans residues 1 to 179; sequence MPLSYQHFRK…FCGSPYSWEQ (179 aa). The spacer stretch occupies residues 180 to 348; that stretch reads ELQHGRLVIK…YCLSHLVNLR (169 aa). The tract at residues 226-246 is disordered; the sequence is GLQPHQGPLASSQPGRSGSIR. Positions 349-692 are polymerase/reverse transcriptase domain (RT); it reads EDRGPCDEHG…YMNLYPVARQ (344 aa). A Reverse transcriptase domain is found at 359–602; sequence EHHIRIPRTP…YSLNFMGYVI (244 aa). Residues aspartate 431, aspartate 553, and aspartate 554 each contribute to the Mg(2+) site.

Belongs to the hepadnaviridae P protein family.

The catalysed reaction is DNA(n) + a 2'-deoxyribonucleoside 5'-triphosphate = DNA(n+1) + diphosphate. It catalyses the reaction Endonucleolytic cleavage to 5'-phosphomonoester.. With respect to regulation, activated by host HSP70 and HSP40 in vitro to be able to bind the epsilon loop of the pgRNA. Because deletion of the RNase H region renders the protein partly chaperone-independent, the chaperones may be needed indirectly to relieve occlusion of the RNA-binding site by this domain. Inhibited by several reverse-transcriptase inhibitors: Lamivudine, Adefovir and Entecavir. Multifunctional enzyme that converts the viral RNA genome into dsDNA in viral cytoplasmic capsids. This enzyme displays a DNA polymerase activity that can copy either DNA or RNA templates, and a ribonuclease H (RNase H) activity that cleaves the RNA strand of RNA-DNA heteroduplexes in a partially processive 3'- to 5'-endonucleasic mode. Neo-synthesized pregenomic RNA (pgRNA) are encapsidated together with the P protein, and reverse-transcribed inside the nucleocapsid. Initiation of reverse-transcription occurs first by binding the epsilon loop on the pgRNA genome, and is initiated by protein priming, thereby the 5'-end of (-)DNA is covalently linked to P protein. Partial (+)DNA is synthesized from the (-)DNA template and generates the relaxed circular DNA (RC-DNA) genome. After budding and infection, the RC-DNA migrates in the nucleus, and is converted into a plasmid-like covalently closed circular DNA (cccDNA). The activity of P protein does not seem to be necessary for cccDNA generation, and is presumably released from (+)DNA by host nuclear DNA repair machinery. The protein is Protein P of Hepatitis B virus genotype A2 subtype adw2 (isolate Germany/991/1990) (HBV-A).